A 441-amino-acid polypeptide reads, in one-letter code: Maltose-6'-phosphate glucosidase MalH (441 aa).

An NAD(+)-binding site is contributed by 4–70 (FSVVIAGGGS…PEIEFLATTN (67 aa)). Positions 93 and 147 each coordinate substrate. Residue cysteine 169 coordinates Mn(2+). Catalysis depends on aspartate 170, which acts as the Proton donor. Position 200 (histidine 200) interacts with Mn(2+). The active-site Proton acceptor is the tyrosine 264. Arginine 284 lines the substrate pocket.

Homotetramer. It depends on NAD(+) as a cofactor. Mn(2+) is required as a cofactor.

It carries out the reaction alpha-maltose 6'-phosphate + H2O = D-glucose 6-phosphate + D-glucose. Catalyzes the hydrolysis of O-alpha-linked disaccharide 6-phosphates, including maltose-6'P and all five phosphorylated isomers of sucrose, but not sucrose-6P. Does not hydrolyze beta-linked disaccharide 6-phosphates such as cellobiose-6'P and gentiobiose-6'P. Is involved in the dissimilation of maltose and related O-alpha-linked glucosides produced via the phosphoenolpyruvate-dependent sugar phosphotransferase system (PEP-PTS). The chain is Maltose-6'-phosphate glucosidase MalH (malH) from Clostridium acetobutylicum (strain ATCC 824 / DSM 792 / JCM 1419 / IAM 19013 / LMG 5710 / NBRC 13948 / NRRL B-527 / VKM B-1787 / 2291 / W).